A 205-amino-acid polypeptide reads, in one-letter code: Type III pantothenate kinase (205 aa).

An ATP-binding site is contributed by 5-12 (DIGNTTYH). Residues Tyr68 and 72 to 75 (GIDR) contribute to the substrate site. The Proton acceptor role is filled by Asp74. A K(+)-binding site is contributed by Asp89. Residue Ser92 coordinates ATP. Substrate is bound at residue Ser144.

Belongs to the type III pantothenate kinase family. Homodimer. NH4(+) is required as a cofactor. It depends on K(+) as a cofactor.

The protein resides in the cytoplasm. It carries out the reaction (R)-pantothenate + ATP = (R)-4'-phosphopantothenate + ADP + H(+). It functions in the pathway cofactor biosynthesis; coenzyme A biosynthesis; CoA from (R)-pantothenate: step 1/5. In terms of biological role, catalyzes the phosphorylation of pantothenate (Pan), the first step in CoA biosynthesis. This chain is Type III pantothenate kinase, found in Sulfurimonas denitrificans (strain ATCC 33889 / DSM 1251) (Thiomicrospira denitrificans (strain ATCC 33889 / DSM 1251)).